A 238-amino-acid polypeptide reads, in one-letter code: Ribonuclease PH (238 aa).

Phosphate-binding positions include Arg-86 and Gly-124–Arg-126.

Belongs to the RNase PH family. Homohexameric ring arranged as a trimer of dimers.

The catalysed reaction is tRNA(n+1) + phosphate = tRNA(n) + a ribonucleoside 5'-diphosphate. Phosphorolytic 3'-5' exoribonuclease that plays an important role in tRNA 3'-end maturation. Removes nucleotide residues following the 3'-CCA terminus of tRNAs; can also add nucleotides to the ends of RNA molecules by using nucleoside diphosphates as substrates, but this may not be physiologically important. Probably plays a role in initiation of 16S rRNA degradation (leading to ribosome degradation) during starvation. The chain is Ribonuclease PH from Shigella dysenteriae serotype 1 (strain Sd197).